The primary structure comprises 320 residues: Chorion protein S36 (320 aa).

A signal peptide spans 1 to 18 (MNCFLFTLFFVAAPLATA). 5 repeat units span residues 178-181 (AAPV), 258-261 (AAPA), 266-269 (AAPA), 274-277 (AAPA), and A290. Positions 259 to 320 (APAQSYNAAP…YGSAPPASGY (62 aa)) are disordered.

Belongs to the chorion protein S36 family.

The protein resides in the secreted. Chorion membrane (egg shell) protein; plays a role in protecting the egg from the environment. In Ceratitis capitata (Mediterranean fruit fly), this protein is Chorion protein S36 (Cp36).